The following is a 142-amino-acid chain: Organic hydroperoxide resistance protein-like 2 (142 aa).

This sequence belongs to the OsmC/Ohr family.

In Staphylococcus saprophyticus subsp. saprophyticus (strain ATCC 15305 / DSM 20229 / NCIMB 8711 / NCTC 7292 / S-41), this protein is Organic hydroperoxide resistance protein-like 2.